We begin with the raw amino-acid sequence, 290 residues long: MPSITGKTKLLGVIGYPVGHSLSPVMHNAALQAMASDYAYVAFPIAPEDLTIAIAGLGASGVQGLSVTIPHKQVVMPLLTQITETARQVGAVNTLWRDGHGWQGTNTDVEGFLAPLLELKQDWSGRTAVILGYGGAARAVVVGLTQLGCPEIIVVGRSQEKLAQFANSWTDPKIKQALQVLPWEALSTVIPKASLLINSTPVGMAPHPKQSPLDQSLVEKLPPTAIAYDLIYTPRPTRFLQHAQERGLVTIDGAEMLVQQGAAALKIWLQQEVPVDVMRQALLHHLEKSA.

Residues Ser-21–Ser-23 and Thr-68 contribute to the shikimate site. Lys-72 functions as the Proton acceptor in the catalytic mechanism. An NADP(+)-binding site is contributed by Glu-84. Residues Asn-93 and Asp-108 each coordinate shikimate. Residues Gly-132 to Ala-136 and Leu-230 contribute to the NADP(+) site. Tyr-232 provides a ligand contact to shikimate. An NADP(+)-binding site is contributed by Gly-253.

This sequence belongs to the shikimate dehydrogenase family. As to quaternary structure, homodimer.

The catalysed reaction is shikimate + NADP(+) = 3-dehydroshikimate + NADPH + H(+). The protein operates within metabolic intermediate biosynthesis; chorismate biosynthesis; chorismate from D-erythrose 4-phosphate and phosphoenolpyruvate: step 4/7. In terms of biological role, involved in the biosynthesis of the chorismate, which leads to the biosynthesis of aromatic amino acids. Catalyzes the reversible NADPH linked reduction of 3-dehydroshikimate (DHSA) to yield shikimate (SA). This Synechocystis sp. (strain ATCC 27184 / PCC 6803 / Kazusa) protein is Shikimate dehydrogenase (NADP(+)).